Consider the following 91-residue polypeptide: Small ribosomal subunit protein uS19 (91 aa).

Belongs to the universal ribosomal protein uS19 family.

In terms of biological role, protein S19 forms a complex with S13 that binds strongly to the 16S ribosomal RNA. This is Small ribosomal subunit protein uS19 from Pseudomonas syringae pv. tomato (strain ATCC BAA-871 / DC3000).